The following is a 198-amino-acid chain: FMN-dependent NADH:quinone oxidoreductase (198 aa).

Residues Ser10, 16–18, 94–97, and 138–141 contribute to the FMN site; these read SQS, MYNF, and TRGG.

The protein belongs to the azoreductase type 1 family. In terms of assembly, homodimer. FMN is required as a cofactor.

The catalysed reaction is 2 a quinone + NADH + H(+) = 2 a 1,4-benzosemiquinone + NAD(+). The enzyme catalyses N,N-dimethyl-1,4-phenylenediamine + anthranilate + 2 NAD(+) = 2-(4-dimethylaminophenyl)diazenylbenzoate + 2 NADH + 2 H(+). Its function is as follows. Quinone reductase that provides resistance to thiol-specific stress caused by electrophilic quinones. Also exhibits azoreductase activity. Catalyzes the reductive cleavage of the azo bond in aromatic azo compounds to the corresponding amines. The sequence is that of FMN-dependent NADH:quinone oxidoreductase from Shewanella baltica (strain OS195).